Consider the following 282-residue polypeptide: Acetyl-coenzyme A carboxylase carboxyl transferase subunit beta (282 aa).

The region spanning leucine 29 to glycine 282 is the CoA carboxyltransferase N-terminal domain. The Zn(2+) site is built by cysteine 33, cysteine 36, cysteine 52, and cysteine 55. The C4-type zinc finger occupies cysteine 33 to cysteine 55.

Belongs to the AccD/PCCB family. In terms of assembly, acetyl-CoA carboxylase is a heterohexamer composed of biotin carboxyl carrier protein (AccB), biotin carboxylase (AccC) and two subunits each of ACCase subunit alpha (AccA) and ACCase subunit beta (AccD). Zn(2+) is required as a cofactor.

The protein resides in the cytoplasm. It carries out the reaction N(6)-carboxybiotinyl-L-lysyl-[protein] + acetyl-CoA = N(6)-biotinyl-L-lysyl-[protein] + malonyl-CoA. It participates in lipid metabolism; malonyl-CoA biosynthesis; malonyl-CoA from acetyl-CoA: step 1/1. In terms of biological role, component of the acetyl coenzyme A carboxylase (ACC) complex. Biotin carboxylase (BC) catalyzes the carboxylation of biotin on its carrier protein (BCCP) and then the CO(2) group is transferred by the transcarboxylase to acetyl-CoA to form malonyl-CoA. The sequence is that of Acetyl-coenzyme A carboxylase carboxyl transferase subunit beta from Syntrophomonas wolfei subsp. wolfei (strain DSM 2245B / Goettingen).